A 425-amino-acid polypeptide reads, in one-letter code: Tyrosine--tRNA ligase (425 aa).

Residue Y37 coordinates L-tyrosine. The short motif at 42 to 51 (PTADSLHLGH) is the 'HIGH' region element. L-tyrosine is bound by residues Y175 and Q179. The short motif at 235-239 (KFGKT) is the 'KMSKS' region element. ATP is bound at residue K238. The region spanning 357 to 414 (ADLQQALVSAELVPSRGQARTMISSNAVTINGEKQANPEYIFSASDRLFDRYTLLRRG) is the S4 RNA-binding domain.

The protein belongs to the class-I aminoacyl-tRNA synthetase family. TyrS type 1 subfamily. Homodimer.

Its subcellular location is the cytoplasm. It catalyses the reaction tRNA(Tyr) + L-tyrosine + ATP = L-tyrosyl-tRNA(Tyr) + AMP + diphosphate + H(+). In terms of biological role, catalyzes the attachment of tyrosine to tRNA(Tyr) in a two-step reaction: tyrosine is first activated by ATP to form Tyr-AMP and then transferred to the acceptor end of tRNA(Tyr). This is Tyrosine--tRNA ligase from Pectobacterium atrosepticum (strain SCRI 1043 / ATCC BAA-672) (Erwinia carotovora subsp. atroseptica).